Here is a 182-residue protein sequence, read N- to C-terminus: Large ribosomal subunit protein uL5 (182 aa).

In terms of assembly, part of the 50S ribosomal subunit; part of the 5S rRNA/uL5/uL18/bL25 (TL7) subcomplex; has also been isolated as a complex with 5S rRNA, bL25 (TL7) and DNA binding protein II. Forms a bridge to the 30S subunit in the 70S ribosome, contacting protein uS13; this bridge is straddled by the 5S rRNA. Contacts the P site tRNA.

This is one of the proteins that bind and probably mediate the attachment of the 5S RNA into the large ribosomal subunit, where it forms part of the central protuberance. In the 70S ribosome it contacts protein S13 of the 30S subunit (forming bridge B1b) connecting the head of the 30S subunit to the top of the 50S subunit. The bridge itself contacts the P site tRNA and is implicated in movement during ribosome translocation. Also contacts the P site tRNA independently of the intersubunit bridge; the 5S rRNA and some of its associated proteins might help stabilize positioning of ribosome-bound tRNAs. This is Large ribosomal subunit protein uL5 (rplE) from Thermus thermophilus (strain ATCC 27634 / DSM 579 / HB8).